The chain runs to 535 residues: Signal transduction histidine-protein kinase AfsQ2 (535 aa).

Residues 1 to 30 are Cytoplasmic-facing; the sequence is MTREHQGGTRGLAAARKGFWSGLRFTSLRL. The chain crosses the membrane as a helical span at residues 31-52; sequence RLVLVFGLVALTAAVSASGIAY. Residues 53-198 lie on the Extracellular side of the membrane; the sequence is WLNREAVLTR…SLEPEAKDLN (146 aa). A helical transmembrane segment spans residues 199-219; it reads SLAWSLGIATALALLGSALLA. Residues 220-535 lie on the Cytoplasmic side of the membrane; sequence QALATTVLKP…DRGKDAKGQV (316 aa). Residues 224 to 276 form the HAMP domain; that stretch reads TTVLKPVHRLGVAARRLGEGKLDTRLRVSGTDELADLSRTFNSAAENLEKRVA. In terms of domain architecture, Histidine kinase spans 291–510; the sequence is DMSHELRTPL…VFTLRLPQDP (220 aa). The residue at position 294 (histidine 294) is a Phosphohistidine. Positions 493 to 535 are disordered; that stretch reads ENAPEGGAVFTLRLPQDPSPPADEDGGPDEETEDRGKDAKGQV. Residues 514 to 525 are compositionally biased toward acidic residues; the sequence is ADEDGGPDEETE. Basic and acidic residues predominate over residues 526–535; it reads DRGKDAKGQV.

It is found in the cell membrane. The catalysed reaction is ATP + protein L-histidine = ADP + protein N-phospho-L-histidine.. Forms part of a two-component regulatory system AfsQ1/AfsQ2 involved in secondary metabolism. May activate AfsQ1 by phosphorylation. In Streptomyces coelicolor (strain ATCC BAA-471 / A3(2) / M145), this protein is Signal transduction histidine-protein kinase AfsQ2 (afsQ2).